Consider the following 248-residue polypeptide: Proteasome subunit alpha (248 aa).

Residues 229–248 (LLEADGATTEAESSAEEEDE) form a disordered region.

This sequence belongs to the peptidase T1A family. In terms of assembly, the 20S proteasome core is composed of 14 alpha and 14 beta subunits that assemble into four stacked heptameric rings, resulting in a barrel-shaped structure. The two inner rings, each composed of seven catalytic beta subunits, are sandwiched by two outer rings, each composed of seven alpha subunits. The catalytic chamber with the active sites is on the inside of the barrel. Has a gated structure, the ends of the cylinder being occluded by the N-termini of the alpha-subunits. Is capped by the proteasome-associated ATPase, ARC.

Its subcellular location is the cytoplasm. The protein operates within protein degradation; proteasomal Pup-dependent pathway. Its activity is regulated as follows. The formation of the proteasomal ATPase ARC-20S proteasome complex, likely via the docking of the C-termini of ARC into the intersubunit pockets in the alpha-rings, may trigger opening of the gate for substrate entry. Interconversion between the open-gate and close-gate conformations leads to a dynamic regulation of the 20S proteasome proteolysis activity. Its function is as follows. Component of the proteasome core, a large protease complex with broad specificity involved in protein degradation. This chain is Proteasome subunit alpha, found in Streptomyces scabiei (strain 87.22).